A 356-amino-acid polypeptide reads, in one-letter code: Peptide chain release factor 1 (356 aa).

At glutamine 233 the chain carries N5-methylglutamine.

This sequence belongs to the prokaryotic/mitochondrial release factor family. Post-translationally, methylated by PrmC. Methylation increases the termination efficiency of RF1.

Its subcellular location is the cytoplasm. Its function is as follows. Peptide chain release factor 1 directs the termination of translation in response to the peptide chain termination codons UAG and UAA. The sequence is that of Peptide chain release factor 1 from Shouchella clausii (strain KSM-K16) (Alkalihalobacillus clausii).